Consider the following 299-residue polypeptide: ATP phosphoribosyltransferase (299 aa).

The protein belongs to the ATP phosphoribosyltransferase family. Long subfamily. In terms of assembly, equilibrium between an active dimeric form, an inactive hexameric form and higher aggregates. Interconversion between the various forms is largely reversible and is influenced by the natural substrates and inhibitors of the enzyme. It depends on Mg(2+) as a cofactor.

It localises to the cytoplasm. It carries out the reaction 1-(5-phospho-beta-D-ribosyl)-ATP + diphosphate = 5-phospho-alpha-D-ribose 1-diphosphate + ATP. Its pathway is amino-acid biosynthesis; L-histidine biosynthesis; L-histidine from 5-phospho-alpha-D-ribose 1-diphosphate: step 1/9. With respect to regulation, feedback inhibited by histidine. In terms of biological role, catalyzes the condensation of ATP and 5-phosphoribose 1-diphosphate to form N'-(5'-phosphoribosyl)-ATP (PR-ATP). Has a crucial role in the pathway because the rate of histidine biosynthesis seems to be controlled primarily by regulation of HisG enzymatic activity. This is ATP phosphoribosyltransferase from Escherichia fergusonii (strain ATCC 35469 / DSM 13698 / CCUG 18766 / IAM 14443 / JCM 21226 / LMG 7866 / NBRC 102419 / NCTC 12128 / CDC 0568-73).